The sequence spans 445 residues: ATP-dependent protease ATPase subunit HslU (445 aa).

Residues I17, 59 to 64 (GVGKTE), D254, E319, and R391 contribute to the ATP site.

It belongs to the ClpX chaperone family. HslU subfamily. A double ring-shaped homohexamer of HslV is capped on each side by a ring-shaped HslU homohexamer. The assembly of the HslU/HslV complex is dependent on binding of ATP.

It is found in the cytoplasm. Functionally, ATPase subunit of a proteasome-like degradation complex; this subunit has chaperone activity. The binding of ATP and its subsequent hydrolysis by HslU are essential for unfolding of protein substrates subsequently hydrolyzed by HslV. HslU recognizes the N-terminal part of its protein substrates and unfolds these before they are guided to HslV for hydrolysis. This Pseudomonas syringae pv. tomato (strain ATCC BAA-871 / DC3000) protein is ATP-dependent protease ATPase subunit HslU.